The sequence spans 288 residues: Serpentine receptor class gamma-1 (288 aa).

A run of 7 helical transmembrane segments spans residues 25 to 45 (LFLQLCYLTPSALFLSRVIYI), 59 to 79 (FYTIFLADCVTGFILVNFSIF), 118 to 138 (FQILVQILFVANRASCVLWPL), 148 to 168 (LKSILTTMAISPCLWIWTIAI), 197 to 217 (FSILRLTSVITIVVATTTMLI), 238 to 258 (VYLSVCYLLPAIAEFEYFLVL), and 268 to 288 (ILHGLVVICWDIQNICSTYVM).

This sequence belongs to the nematode receptor-like protein srg family.

It is found in the membrane. The chain is Serpentine receptor class gamma-1 (srg-1) from Caenorhabditis elegans.